A 285-amino-acid polypeptide reads, in one-letter code: Complex I assembly factor TIMMDC1, mitochondrial (285 aa).

4 helical membrane passes run 80-100 (AALS…FIYA), 137-159 (RWSW…LTVY), 165-185 (LSHF…NLGL), and 188-208 (LVAG…LLMA).

It belongs to the Tim17/Tim22/Tim23 family. In terms of assembly, associates with the intermediate 315 kDa subcomplex of incompletely assembled complex I. Interacts with TMEM70.

The protein localises to the mitochondrion membrane. Functionally, chaperone protein involved in the assembly of the mitochondrial NADH:ubiquinone oxidoreductase complex (complex I). Participates in constructing the membrane arm of complex I. This is Complex I assembly factor TIMMDC1, mitochondrial from Rattus norvegicus (Rat).